The primary structure comprises 410 residues: Peptidase T (410 aa).

H79 is a binding site for Zn(2+). The active site involves D81. Residue D142 coordinates Zn(2+). Catalysis depends on E176, which acts as the Proton acceptor. Residues E177, D199, and H381 each coordinate Zn(2+).

The protein belongs to the peptidase M20B family. The cofactor is Zn(2+).

The protein localises to the cytoplasm. It catalyses the reaction Release of the N-terminal residue from a tripeptide.. Its function is as follows. Cleaves the N-terminal amino acid of tripeptides. In Listeria monocytogenes serotype 4b (strain F2365), this protein is Peptidase T.